Consider the following 510-residue polypeptide: 2,3-bisphosphoglycerate-independent phosphoglycerate mutase (510 aa).

Mn(2+)-binding residues include aspartate 11 and serine 61. The active-site Phosphoserine intermediate is the serine 61. Substrate-binding positions include histidine 124, 154–155, arginine 185, arginine 191, 260–263, and lysine 333; these read RD and RPDR. Mn(2+) contacts are provided by aspartate 398, histidine 402, aspartate 439, histidine 440, and histidine 457.

It belongs to the BPG-independent phosphoglycerate mutase family. As to quaternary structure, monomer. The cofactor is Mn(2+).

It catalyses the reaction (2R)-2-phosphoglycerate = (2R)-3-phosphoglycerate. It participates in carbohydrate degradation; glycolysis; pyruvate from D-glyceraldehyde 3-phosphate: step 3/5. In terms of biological role, catalyzes the interconversion of 2-phosphoglycerate and 3-phosphoglycerate. The sequence is that of 2,3-bisphosphoglycerate-independent phosphoglycerate mutase from Mycoplasma mobile (strain ATCC 43663 / 163K / NCTC 11711) (Mesomycoplasma mobile).